We begin with the raw amino-acid sequence, 175 residues long: ATP synthase subunit b, chloroplastic (175 aa).

A helical transmembrane segment spans residues 24 to 46; it reads VLNLAVVLAIVLTYVGDALRGLL.

It belongs to the ATPase B chain family. As to quaternary structure, F-type ATPases have 2 components, F(1) - the catalytic core - and F(0) - the membrane proton channel. F(1) has five subunits: alpha(3), beta(3), gamma(1), delta(1), epsilon(1). F(0) has four main subunits: a(1), b(1), b'(1) and c(10-14). The alpha and beta chains form an alternating ring which encloses part of the gamma chain. F(1) is attached to F(0) by a central stalk formed by the gamma and epsilon chains, while a peripheral stalk is formed by the delta, b and b' chains.

It is found in the plastid. Its subcellular location is the chloroplast thylakoid membrane. Functionally, f(1)F(0) ATP synthase produces ATP from ADP in the presence of a proton or sodium gradient. F-type ATPases consist of two structural domains, F(1) containing the extramembraneous catalytic core and F(0) containing the membrane proton channel, linked together by a central stalk and a peripheral stalk. During catalysis, ATP synthesis in the catalytic domain of F(1) is coupled via a rotary mechanism of the central stalk subunits to proton translocation. Its function is as follows. Component of the F(0) channel, it forms part of the peripheral stalk, linking F(1) to F(0). The chain is ATP synthase subunit b, chloroplastic from Chlorella vulgaris (Green alga).